Reading from the N-terminus, the 87-residue chain is Large ribosomal subunit protein bL27 (87 aa).

A disordered region spans residues 1–24; that stretch reads MATKKAGGSSRNGRDSAGRRLGVK.

This sequence belongs to the bacterial ribosomal protein bL27 family.

The sequence is that of Large ribosomal subunit protein bL27 from Rickettsia massiliae (strain Mtu5).